Consider the following 410-residue polypeptide: Serine hydroxymethyltransferase (410 aa).

(6S)-5,6,7,8-tetrahydrofolate contacts are provided by residues leucine 119 and 123–125; that span reads GHL. At lysine 228 the chain carries N6-(pyridoxal phosphate)lysine. 351-353 contacts (6S)-5,6,7,8-tetrahydrofolate; it reads SPF.

Belongs to the SHMT family. Homodimer. Pyridoxal 5'-phosphate serves as cofactor.

Its subcellular location is the cytoplasm. It carries out the reaction (6R)-5,10-methylene-5,6,7,8-tetrahydrofolate + glycine + H2O = (6S)-5,6,7,8-tetrahydrofolate + L-serine. It functions in the pathway one-carbon metabolism; tetrahydrofolate interconversion. Its pathway is amino-acid biosynthesis; glycine biosynthesis; glycine from L-serine: step 1/1. In terms of biological role, catalyzes the reversible interconversion of serine and glycine with tetrahydrofolate (THF) serving as the one-carbon carrier. This reaction serves as the major source of one-carbon groups required for the biosynthesis of purines, thymidylate, methionine, and other important biomolecules. Also exhibits THF-independent aldolase activity toward beta-hydroxyamino acids, producing glycine and aldehydes, via a retro-aldol mechanism. In Alkaliphilus metalliredigens (strain QYMF), this protein is Serine hydroxymethyltransferase.